Reading from the N-terminus, the 1408-residue chain is Palladin (1408 aa).

A disordered region spans residues 69-229; that stretch reads SKSPISLCET…SASQSPTADQ (161 aa). Polar residues-rich tracts occupy residues 149-169 and 193-229; these read PNPS…QSQL and RSPN…TADQ. Position 194 is a phosphoserine (Ser194). Ig-like C2-type domains are found at residues 278–367 and 448–546; these read PRFI…AEVF and PVFT…LVIT. Disulfide bonds link Cys299–Cys351 and Cys469–Cys528. Residues 569-573 form an interaction with VASP region; the sequence is FPPPP. Disordered stretches follow at residues 631 to 660 and 687 to 727; these read NGKA…LAKP and PPGV…VPSE. Position 639 is a phosphoserine (Ser639). Thr642 bears the Phosphothreonine mark. Ser648 carries the post-translational modification Phosphoserine. The segment at 653–683 is interaction with LASP1; that stretch reads PPPLLAKPKLDPLKLQQLQNQVRLEQEACAW. Positions 683–713 are interaction with SORBS2, SPIN90 and SRC; sequence WPPAPPGVPCNSSSSGSSAPPSPPFPPPPPA. Residues 691 to 701 show a composition bias toward low complexity; it reads PCNSSSSGSSA. Residues Ser700, Ser704, and Ser744 each carry the phosphoserine modification. Residues 702 to 714 show a composition bias toward pro residues; it reads PPSPPFPPPPPAF. Disordered regions lie at residues 758–854, 882–904, and 960–981; these read NLGP…RFGP, KGVT…SDEE, and ETAA…LDGQ. The segment covering 765–779 has biased composition (low complexity); that stretch reads LPTPTSSPSSSSLPS. Composition is skewed to pro residues over residues 780-797, 807-818, and 828-840; these read PLSP…PPFV, SPSPPPPPPPVF, and DVFP…PPLP. The segment at 782–842 is interaction with EPS8; sequence SPTPRPFGRA…PPPPPPLPSS (61 aa). The interaction with SORBS2, SPIN90, SRC and PFN1 stretch occupies residues 807–842; it reads SPSPPPPPPPVFSPSAAYPVPDVFPLPPPPPPLPSS. The interaction with VASP stretch occupies residues 830–834; the sequence is FPLPP. Phosphoserine is present on Ser901. Phosphoserine is present on residues Ser1004 and Ser1009. The region spanning 1026–1110 is the Ig-like C2-type 3 domain; the sequence is PFFEMKLKHY…MAANPQGRVS (85 aa). Residues 1121-1150 form a disordered region; the sequence is NQRGRSPRSPSGHPHARRPRSRSRDSGDEN. The segment covering 1123 to 1133 has biased composition (low complexity); it reads RGRSPRSPSGH. 4 positions are modified to phosphoserine: Ser1126, Ser1129, Ser1131, and Ser1141. A Phosphoserine; by PKB/AKT1 modification is found at Ser1143. Ser1146 is modified (phosphoserine). Ig-like C2-type domains lie at 1160 to 1251 and 1259 to 1349; these read PHFL…LVVA and PVFM…ARLD. Interaction with EZR stretches follow at residues 1162–1251 and 1261–1351; these read FLQA…LVVA and FMEK…LDVY. The cysteines at positions 1181 and 1233 are disulfide-linked. Ser1377 carries the phosphoserine modification.

It belongs to the myotilin/palladin family. As to quaternary structure, interacts with EPS8. Interacts with LASP1. Interacts with VASP. Interacts with ACTN. Interacts with SORBS2. Interacts with PFN1. Interacts with LPP. Interacts with SPIN90. Interacts with SRC. Interacts with EZR. Interacts with RAI14. Phosphorylated predominantly on serines and, to a lesser extent, on tyrosines. Phosphorylation at Ser-1143 by PKB/AKT1 modulates cytoskeletal organization and cell motility. As to expression, detected in both muscle and non-muscle tissues and cells (at protein level). Isoform 3 is widely expressed, isoform 4 is particularly abundant in tissues rich in smooth muscle and in the cardiac muscle and isoform 1 is detected in heart.

It localises to the cytoplasm. The protein resides in the cytoskeleton. It is found in the cell junction. The protein localises to the focal adhesion. Its subcellular location is the myofibril. It localises to the sarcomere. The protein resides in the z line. It is found in the cell projection. The protein localises to the ruffle. Its subcellular location is the podosome. It localises to the lamellipodium. The protein resides in the axon. It is found in the growth cone. Functionally, cytoskeletal protein required for organization of normal actin cytoskeleton. Roles in establishing cell morphology, motility, cell adhesion and cell-extracellular matrix interactions in a variety of cell types. May function as a scaffolding molecule with the potential to influence both actin polymerization and the assembly of existing actin filaments into higher-order arrays. Binds to proteins that bind to either monomeric or filamentous actin. Localizes at sites where active actin remodeling takes place, such as lamellipodia and membrane ruffles. Different isoforms may have functional differences. Involved in the control of morphological and cytoskeletal changes associated with dendritic cell maturation. Involved in targeting ACTN to specific subcellular locations. May be required for the initiation of neural tube closure. In Mus musculus (Mouse), this protein is Palladin (Palld).